The chain runs to 286 residues: NADP-dependent dehydrogenase clz5 (286 aa).

Residues Ser-49, Leu-51, Asp-93, Tyr-207, Lys-211, Ile-241, and Gln-245 each coordinate NADP(+). The active-site Proton acceptor is Tyr-207. Catalysis depends on Tyr-207, which acts as the Proton donor. The active-site Lowers pKa of active site Tyr is the Lys-211.

It belongs to the short-chain dehydrogenases/reductases (SDR) family. In terms of assembly, homodimer.

Its subcellular location is the cytoplasm. It is found in the cytosol. It functions in the pathway secondary metabolite biosynthesis. NADP-dependent dehydrogenase; part of the gene cluster that mediates the biosynthesis of squalestatin S1 (SQS1, also known as zaragozic acid A), a heavily oxidized fungal polyketide that offers potent cholesterol lowering activity by targeting squalene synthase (SS). SQS1 is composed of a 2,8-dioxobicyclic[3.2.1]octane-3,4,5-tricarboxyclic acid core that is connected to two lipophilic polyketide arms. These initial steps feature the priming of an unusual benzoic acid starter unit onto the highly reducing polyketide synthase clz14, followed by oxaloacetate extension and product release to generate a tricarboxylic acid containing product. The phenylalanine ammonia lyase (PAL) clz10 and the acyl-CoA ligase clz12 are involved in transforming phenylalanine into benzoyl-CoA. The citrate synthase-like protein clz17 is involved in connecting the C-alpha-carbons of the hexaketide chain and oxaloacetate to afford the tricarboxylic acid unit. The potential hydrolytic enzymes, clz11 and clz13, are in close proximity to pks2 and may participate in product release. On the other side, the tetraketide arm is synthesized by a the squalestatin tetraketide synthase clz2 and enzymatically esterified to the core in the last biosynthetic step, by the acetyltransferase clz6. The biosynthesis of the tetraketide must involve 3 rounds of chain extension. After the first and second rounds methyl-transfer occurs, and in all rounds of extension the ketoreductase and dehydratase are active. The enoyl reductase and C-MeT of clz2 are not active in the final round of extension. The acetyltransferase clz6 appears to have a broad substrate selectivity for its acyl CoA substrate, allowing the in vitro synthesis of novel squalestatins. The biosynthesis of SQS1 requires several oxidative steps likely performed by oxidoreductases clz3, clz15 and clz16. Finally, in support of the identification of the cluster as being responsible for SQS1 production, the cluster contains a gene encoding a putative squalene synthase (SS) clz20, suggesting a likely mechanism for self-resistance. This is NADP-dependent dehydrogenase clz5 from Cochliobolus lunatus (Filamentous fungus).